The sequence spans 607 residues: UvrABC system protein C (607 aa).

Residues 16–94 enclose the GIY-YIG domain; that stretch reads ARPGVYRMFD…IKQWRPPYNI (79 aa). Residues 203-238 form the UVR domain; it reads QQLGNELNAEMEKAAMALNFEKAAELRDQIALLRRV.

This sequence belongs to the UvrC family. Interacts with UvrB in an incision complex.

It localises to the cytoplasm. Its function is as follows. The UvrABC repair system catalyzes the recognition and processing of DNA lesions. UvrC both incises the 5' and 3' sides of the lesion. The N-terminal half is responsible for the 3' incision and the C-terminal half is responsible for the 5' incision. The protein is UvrABC system protein C of Pseudomonas putida (strain W619).